The primary structure comprises 607 residues: Elongation factor 4 (607 aa).

In terms of domain architecture, tr-type G spans 11 to 193 (SKIRNFSIIA…QIVEKVPAPT (183 aa)). GTP is bound by residues 23–28 (DHGKST) and 140–143 (NKID).

The protein belongs to the TRAFAC class translation factor GTPase superfamily. Classic translation factor GTPase family. LepA subfamily.

Its subcellular location is the cell membrane. The enzyme catalyses GTP + H2O = GDP + phosphate + H(+). Its function is as follows. Required for accurate and efficient protein synthesis under certain stress conditions. May act as a fidelity factor of the translation reaction, by catalyzing a one-codon backward translocation of tRNAs on improperly translocated ribosomes. Back-translocation proceeds from a post-translocation (POST) complex to a pre-translocation (PRE) complex, thus giving elongation factor G a second chance to translocate the tRNAs correctly. Binds to ribosomes in a GTP-dependent manner. This chain is Elongation factor 4, found in Bacillus mycoides (strain KBAB4) (Bacillus weihenstephanensis).